The primary structure comprises 434 residues: BEN domain-containing protein 7 (434 aa).

Glycyl lysine isopeptide (Lys-Gly) (interchain with G-Cter in SUMO2) cross-links involve residues lysine 16, lysine 56, and lysine 85. Disordered regions lie at residues 96–151 (PQRS…SNGE) and 212–262 (SRKR…ERTS). Residues 97 to 150 (QRSNSSTEASQGLHSNSRGAWNELPTQSGQFSGQSGPRSRTFQTQPHISASSNG) show a composition bias toward polar residues. Basic residues predominate over residues 212–222 (SRKRNKKKKVL). Residue lysine 244 forms a Glycyl lysine isopeptide (Lys-Gly) (interchain with G-Cter in SUMO2) linkage. Residues 289 to 399 (GFDVFMPKSQ…RRLKRGSAEV (111 aa)) enclose the BEN domain. Threonine 326 carries the post-translational modification Phosphothreonine. At serine 330 the chain carries Phosphoserine. Residues 414–434 (TGHTFVIKRETPEDPEPGSVA) form a disordered region.

The sequence is that of BEN domain-containing protein 7 (Bend7) from Mus musculus (Mouse).